We begin with the raw amino-acid sequence, 529 residues long: uncharacterized protein (529 aa).

The segment at 1-20 is disordered; that stretch reads MGADLKQPQDADSPPKGVSR. The segment at residues 1 to 52 is a signal peptide (tat-type signal); sequence MGADLKQPQDADSPPKGVSRRRFLTTGAAAVVGTGVGAGGTALLSSHPRGPA.

Predicted to be exported by the Tat system. The position of the signal peptide cleavage has not been experimentally proven.

This is an uncharacterized protein from Mycobacterium tuberculosis (strain CDC 1551 / Oshkosh).